Here is a 187-residue protein sequence, read N- to C-terminus: Peptide deformylase (187 aa).

2 residues coordinate Fe cation: cysteine 107 and histidine 149. Glutamate 150 is an active-site residue. Residue histidine 153 coordinates Fe cation.

Belongs to the polypeptide deformylase family. Fe(2+) is required as a cofactor.

The catalysed reaction is N-terminal N-formyl-L-methionyl-[peptide] + H2O = N-terminal L-methionyl-[peptide] + formate. Removes the formyl group from the N-terminal Met of newly synthesized proteins. Requires at least a dipeptide for an efficient rate of reaction. N-terminal L-methionine is a prerequisite for activity but the enzyme has broad specificity at other positions. This is Peptide deformylase from Picosynechococcus sp. (strain ATCC 27264 / PCC 7002 / PR-6) (Agmenellum quadruplicatum).